Consider the following 167-residue polypeptide: Lipoprotein signal peptidase (167 aa).

Helical transmembrane passes span 56–76 and 84–104; these read FAPP…VLVF and TPIF…NMID. Catalysis depends on residues D113 and D139. A helical transmembrane segment spans residues 132–152; that stretch reads WPIFNVADSAITIGACMLVLF.

This sequence belongs to the peptidase A8 family.

The protein localises to the cell inner membrane. The enzyme catalyses Release of signal peptides from bacterial membrane prolipoproteins. Hydrolyzes -Xaa-Yaa-Zaa-|-(S,diacylglyceryl)Cys-, in which Xaa is hydrophobic (preferably Leu), and Yaa (Ala or Ser) and Zaa (Gly or Ala) have small, neutral side chains.. It functions in the pathway protein modification; lipoprotein biosynthesis (signal peptide cleavage). Functionally, this protein specifically catalyzes the removal of signal peptides from prolipoproteins. The sequence is that of Lipoprotein signal peptidase from Chlorobium luteolum (strain DSM 273 / BCRC 81028 / 2530) (Pelodictyon luteolum).